Here is a 177-residue protein sequence, read N- to C-terminus: Thymidine kinase (177 aa).

Glycine 11–serine 18 is a binding site for ATP. Catalysis depends on glutamate 83, which acts as the Proton acceptor. Position 113 (phenylalanine 113) interacts with substrate. Cysteine 138 and cysteine 141 together coordinate Zn(2+). Substrate is bound at residue isoleucine 157–glycine 161. The Zn(2+) site is built by cysteine 170 and cysteine 173.

The protein belongs to the thymidine kinase family. As to quaternary structure, homotetramer. Two molecules of substrate bind to each enzyme tetramer.

The catalysed reaction is thymidine + ATP = dTMP + ADP + H(+). Functionally, phosphorylates thymidine and thymidine analogs, such as azidothymidine (AZT). Part of the salvage pathway for pyrimidine deoxyribonucleotide synthesis. The polypeptide is Thymidine kinase (OPG101) (Procyon lotor (Raccoon)).